Reading from the N-terminus, the 351-residue chain is Protein-glutamate methylesterase/protein-glutamine glutaminase (351 aa).

A Response regulatory domain is found at 8 to 125 (TVVVVDDSLT…GEDPFAGLGD (118 aa)). D59 is subject to 4-aspartylphosphate. One can recognise a CheB-type methylesterase domain in the interval 151-345 (PKIGTVVGIG…PAILNLCERR (195 aa)). Residues S162, H188, and D287 contribute to the active site.

The protein belongs to the CheB family. Post-translationally, phosphorylated by CheA. Phosphorylation of the N-terminal regulatory domain activates the methylesterase activity.

The protein localises to the cytoplasm. The catalysed reaction is [protein]-L-glutamate 5-O-methyl ester + H2O = L-glutamyl-[protein] + methanol + H(+). The enzyme catalyses L-glutaminyl-[protein] + H2O = L-glutamyl-[protein] + NH4(+). Its function is as follows. Involved in chemotaxis. Part of a chemotaxis signal transduction system that modulates chemotaxis in response to various stimuli. Catalyzes the demethylation of specific methylglutamate residues introduced into the chemoreceptors (methyl-accepting chemotaxis proteins or MCP) by CheR. Also mediates the irreversible deamidation of specific glutamine residues to glutamic acid. The polypeptide is Protein-glutamate methylesterase/protein-glutamine glutaminase (Gluconobacter oxydans (strain 621H) (Gluconobacter suboxydans)).